Here is a 193-residue protein sequence, read N- to C-terminus: NADH-quinone oxidoreductase subunit B (193 aa).

Positions 1 to 25 are disordered; that stretch reads MGLNDSSGTLVAPKPKGIIDPNTGR. Cys72, Cys73, Cys137, and Cys167 together coordinate [4Fe-4S] cluster.

Belongs to the complex I 20 kDa subunit family. NDH-1 is composed of 14 different subunits. Subunits NuoB, C, D, E, F, and G constitute the peripheral sector of the complex. [4Fe-4S] cluster is required as a cofactor.

The protein resides in the cell inner membrane. The enzyme catalyses a quinone + NADH + 5 H(+)(in) = a quinol + NAD(+) + 4 H(+)(out). Functionally, NDH-1 shuttles electrons from NADH, via FMN and iron-sulfur (Fe-S) centers, to quinones in the respiratory chain. Couples the redox reaction to proton translocation (for every two electrons transferred, four hydrogen ions are translocated across the cytoplasmic membrane), and thus conserves the redox energy in a proton gradient. This chain is NADH-quinone oxidoreductase subunit B, found in Mesorhizobium japonicum (strain LMG 29417 / CECT 9101 / MAFF 303099) (Mesorhizobium loti (strain MAFF 303099)).